A 781-amino-acid chain; its full sequence is Mitogen-activated protein kinase 7 (781 aa).

Residues M1–G27 form a disordered region. N-acetylalanine is present on A2. Residues A2–T77 are required for cytoplasmic targeting. Residues Y55–L347 enclose the Protein kinase domain. Residues I61 to V69 and K84 contribute to the ATP site. The tract at residues G78–L139 is required for binding to MAP2K5. Residues M140–Q406 are necessary for oligomerization. Residue D182 is the Proton acceptor of the active site. Residues T219–Y221 carry the TXY motif. Residues Q402–V708 are disordered. Residues P407–P781 are may not be required for kinase activity; required to stimulate MEF2C activity. Pro residues-rich tracts occupy residues S433–A445 and Q454–A463. Residues K476–S486 are compositionally biased toward low complexity. 3 stretches are compositionally biased toward basic and acidic residues: residues P502–E519, R527–G544, and D563–T573. The Nuclear localization signal signature appears at R505 to E539. Composition is skewed to pro residues over residues P578–G594 and G601–A614. Low complexity-rich tracts occupy residues A615–Q632 and G642–F652. The segment covering P653–A664 has biased composition (pro residues). Residues S668–S685 are compositionally biased toward polar residues. Residue S685 is modified to Phosphoserine. T698 carries the post-translational modification Phosphothreonine.

The protein belongs to the protein kinase superfamily. CMGC Ser/Thr protein kinase family. MAP kinase subfamily. As to quaternary structure, interacts with MAP2K5. Forms oligomers. Interacts with MEF2A, MEF2C and MEF2D; the interaction phosphorylates the MEF2s and enhances transcriptional activity of MEF2A, MEF2C but not MEF2D. Interacts with SGK1. Interacts with PML. Interacts (via N-terminal half) with HSP90AB1-CDC37 chaperone complex in resting cells; the interaction is MAP2K5-independent and prevents MAPK7 from ubiquitination and proteasomal degradation. Interacts with STUB1/CHIP; the interaction is enhanced in the presence of IGF1 or MAP2K5 and promotes STUB1/CHIP E3 ligase activity. Mg(2+) is required as a cofactor. In terms of processing, dually phosphorylated on Thr-219 and Tyr-221, which activates the enzyme.

Its subcellular location is the cytoplasm. It localises to the nucleus. It is found in the PML body. It catalyses the reaction L-seryl-[protein] + ATP = O-phospho-L-seryl-[protein] + ADP + H(+). The enzyme catalyses L-threonyl-[protein] + ATP = O-phospho-L-threonyl-[protein] + ADP + H(+). Its activity is regulated as follows. Activated by tyrosine and threonine phosphorylation. Activated in response to hyperosmolarity, hydrogen peroxide, and epidermal growth factor (EGF). Plays a role in various cellular processes such as proliferation, differentiation and cell survival. The upstream activator of MAPK7 is the MAPK kinase MAP2K5. Upon activation, it translocates to the nucleus and phosphorylates various downstream targets including MEF2C. EGF activates MAPK7 through a Ras-independent and MAP2K5-dependent pathway. As part of the MAPK/ERK signaling pathway, acts as a negative regulator of apoptosis in cardiomyocytes via interaction with STUB1/CHIP and promotion of STUB1-mediated ubiquitination and degradation of ICER-type isoforms of CREM. May have a role in muscle cell differentiation. May be important for endothelial function and maintenance of blood vessel integrity. MAP2K5 and MAPK7 interact specifically with one another and not with MEK1/ERK1 or MEK2/ERK2 pathways. Phosphorylates SGK1 at Ser-78 and this is required for growth factor-induced cell cycle progression. Involved in the regulation of p53/TP53 by disrupting the PML-MDM2 interaction. This is Mitogen-activated protein kinase 7 (MAPK7) from Bos taurus (Bovine).